The chain runs to 152 residues: Deoxyuridine 5'-triphosphate nucleotidohydrolase (152 aa).

Residues Arg-65 to Gly-67, Asn-78, and Thr-82 to Asp-84 contribute to the substrate site.

Belongs to the dUTPase family. Requires Mg(2+) as cofactor.

It carries out the reaction dUTP + H2O = dUMP + diphosphate + H(+). Its pathway is pyrimidine metabolism; dUMP biosynthesis; dUMP from dCTP (dUTP route): step 2/2. This enzyme is involved in nucleotide metabolism: it produces dUMP, the immediate precursor of thymidine nucleotides and it decreases the intracellular concentration of dUTP so that uracil cannot be incorporated into DNA. The polypeptide is Deoxyuridine 5'-triphosphate nucleotidohydrolase (Chlorobaculum tepidum (strain ATCC 49652 / DSM 12025 / NBRC 103806 / TLS) (Chlorobium tepidum)).